The following is a 163-amino-acid chain: MAGYGVDGQRMMGVVGMDSRGMGYGGRPEPPLPPDASSTLYIEGLPANCTRREVSHIFRPFVGFREVRLVNKESRHPGGDPHVLCFVDFDNPAQATIALEALQGHVTDDVNVSAPAEEGILREKRAQCAQGFLPCKDNKCYCCIGGRTHDCYYTMAQCSHACF.

The 80-residue stretch at 38–117 (STLYIEGLPA…DDVNVSAPAE (80 aa)) folds into the RRM domain. 2 disulfides stabilise this stretch: Cys140-Cys162 and Cys143-Cys151.

Belongs to the MEG family. In terms of tissue distribution, ubiquitous.

The protein is Protein MATERNALLY EXPRESSED GENE 5 (MEG5) of Zea mays (Maize).